A 195-amino-acid chain; its full sequence is Der GTPase-activating protein YihI (195 aa).

Residues 1-81 (MSRTKKTRRI…KAVVKEVKDP (81 aa)) form a disordered region. Composition is skewed to basic and acidic residues over residues 9-23 (RITD…DKPK), 38-49 (TRYELDAQAREE), and 66-81 (DPAE…VKDP).

The protein belongs to the YihI family. Interacts with Der.

Functionally, a GTPase-activating protein (GAP) that modifies Der/EngA GTPase function. May play a role in ribosome biogenesis. The polypeptide is Der GTPase-activating protein YihI (Mannheimia haemolytica (Pasteurella haemolytica)).